Consider the following 200-residue polypeptide: Pyridoxal phosphate homeostasis protein (200 aa).

Position 11 is an N6-(pyridoxal phosphate)lysine (Lys-11).

This sequence belongs to the pyridoxal phosphate-binding protein YggS/PROSC family. As to quaternary structure, monomer.

In terms of biological role, pyridoxal 5'-phosphate (PLP)-binding protein, which is involved in PLP homeostasis. The protein is Pyridoxal phosphate homeostasis protein of Buchnera aphidicola subsp. Acyrthosiphon pisum (strain APS) (Acyrthosiphon pisum symbiotic bacterium).